The following is an 832-amino-acid chain: MSGRGGCGPCWGLLLALVLALGALPWTQGAEQEHHDEIQGFQIVTFKWHHVQDPYIIALWVLVASLAKIVFHLSHKVTSVVPESALLIVLGLVLGGIVLAADHIASFTLTPTVFFFYLLPPIVLDAGYFMPNRLFFSNLGSILLYAVVGTVWNAATTGLSLYGVFLSGIMGELKIGLLDFLLFGSLIAAVDPVAVLAVFEEVHVNEVLFIIVFGESLLNDAVTVVLYNVFQSFVTLGGDKVTGVDCVKGIVSFFVVSLGGTLVGVVFAFLLSLVTRFTKHVRVIEPGFVFIISYLSYLTSEMLSLSSILAITFCGICCQKYVKANISEQSATTVRYTMKMLASGAETIIFMFLGISAVDPLIWTWNTAFVLLTLLFVSVFRAIGVVLQTWLLNRYRMVQLELIDQVVMSYGGLRGAVAFALVALLDGNKVKEKNLFVSTTIIVVFFTVIFQGLTIKPLVQWLKVKRSEHREPKLNEKLHGRAFDHILSAIEDISGQIGHNYLRDKWANFDRRFLSKLLMRQSAQKSRDRILNVFHELNLKDAISYVTEGERRGSLAFIRSPSTDNMVNVDFSTPRPSTVEASVSYLLRESASAVCLDMQSLEQRRRSVRDAEDVITHHTLQQYLYKPRQEYKHLYSRHVLSPSEDEKQDKEIFHRTMRKRLESFKSAKLGLGQSKKATKHKRERERAQKRRNSSVPNGKLPLDSPAYGLTLKERELELSDPEEAPDYYEAEKMSGGIEFLASVTKDTTSDSPAGIDNPVFSPDEDLAPSLLARVPPWLSPGEAVVPSQRARVQIPYSPGNFRRLAPFRLSNKSVDSFLLAEDGAEHPESTHM.

The signal sequence occupies residues 1–29 (MSGRGGCGPCWGLLLALVLALGALPWTQG). Residues 30 to 50 (AEQEHHDEIQGFQIVTFKWHH) lie on the Extracellular side of the membrane. Residues 51–73 (VQDPYIIALWVLVASLAKIVFHL) traverse the membrane as a helical segment. Topologically, residues 74–81 (SHKVTSVV) are cytoplasmic. The chain crosses the membrane as a helical span at residues 82-101 (PESALLIVLGLVLGGIVLAA). Residues 102-110 (DHIASFTLT) are Extracellular-facing. Residues 111 to 128 (PTVFFFYLLPPIVLDAGY) form a helical membrane-spanning segment. The Cytoplasmic segment spans residues 129-131 (FMP). The helical transmembrane segment at 132-167 (NRLFFSNLGSILLYAVVGTVWNAATTGLSLYGVFLS) threads the bilayer. A 1,2-diacyl-sn-glycero-3-phospho-(1D-myo-inositol) contacts are provided by Gly140 and Ser141. The Extracellular portion of the chain corresponds to 168 to 180 (GIMGELKIGLLDF). Residues 181 to 202 (LLFGSLIAAVDPVAVLAVFEEV) form a helical membrane-spanning segment. Over 203 to 204 (HV) the chain is Cytoplasmic. A helical transmembrane segment spans residues 205 to 236 (NEVLFIIVFGESLLNDAVTVVLYNVFQSFVTL). The Extracellular portion of the chain corresponds to 237-243 (GGDKVTG). Residues 244–278 (VDCVKGIVSFFVVSLGGTLVGVVFAFLLSLVTRFT) form a helical membrane-spanning segment. At 279–280 (KH) the chain is on the cytoplasmic side. Residues 281-303 (VRVIEPGFVFIISYLSYLTSEML) traverse the membrane as a helical segment. Residues 304–305 (SL) are Extracellular-facing. The chain crosses the membrane as a helical span at residues 306–322 (SSILAITFCGICCQKYV). The Cytoplasmic segment spans residues 323 to 329 (KANISEQ). Residues 330-358 (SATTVRYTMKMLASGAETIIFMFLGISAV) form a helical membrane-spanning segment. Residues 359 to 366 (DPLIWTWN) lie on the Extracellular side of the membrane. A helical transmembrane segment spans residues 367–388 (TAFVLLTLLFVSVFRAIGVVLQ). At 389 to 401 (TWLLNRYRMVQLE) the chain is on the cytoplasmic side. An a 1,2-diacyl-sn-glycero-3-phospho-(1D-myo-inositol)-binding site is contributed by Met397. A helical transmembrane segment spans residues 402-425 (LIDQVVMSYGGLRGAVAFALVALL). Residues 426-432 (DGNKVKE) lie on the Extracellular side of the membrane. The helical transmembrane segment at 433–466 (KNLFVSTTIIVVFFTVIFQGLTIKPLVQWLKVKR) threads the bilayer. Residues 467 to 832 (SEHREPKLNE…GAEHPESTHM (366 aa)) are Cytoplasmic-facing. Residues Gln496, Ile497, and His499 each coordinate a 1,2-diacyl-sn-glycero-3-phospho-(1D-myo-inositol). A phosphoserine mark is found at Ser554 and Ser562. The interval 575–589 (RPSTVEASVSYLLRE) is interaction with EZR. The interval 590–667 (SASAVCLDMQ…RKRLESFKSA (78 aa)) is interaction with NHERF4. The interval 591-696 (ASAVCLDMQS…AQKRRNSSVP (106 aa)) is interaction with AHCYL1. Phosphoserine is present on residues Ser592 and Ser607. Position 663 is a phosphoserine; by SGK1 (Ser663). Residues 664–706 (FKSAKLGLGQSKKATKHKRERERAQKRRNSSVPNGKLPLDSPA) form a disordered region. Residues 676–692 (KATKHKRERERAQKRRN) show a composition bias toward basic residues. A phosphoserine mark is found at Ser719, Ser813, and Ser816.

Belongs to the monovalent cation:proton antiporter 1 (CPA1) transporter (TC 2.A.36) family. Homodimer. Found in the forms of complex and dynamic macromolecular complexes. Interacts with CHP1; this interaction increases trafficking and activity at the plasma membrane of SLC9A3. Interacts with CHP2 and SHANK2. Interacts with NHERF4 and interaction decreases in response to elevated calcium ion levels. Binds NHERF1 and NHERF2. Interacts with PDZK1 (via C-terminal PDZ domain). Interacts with AHCYL1; interaction is required for SLC9A3 activity. Interacts with EZR; interaction targets SLC9A3 to the apical membrane. Interacts with SNX27 (via PDZ domains); directs SLC9A3 membrane insertion from early endosomes to the plasma membrane. Post-translationally, phosphorylated by PKA, which inhibits activity. Phosphorylation at Ser-663 by SGK1 is associated with increased abundance at the cell membrane and activity. Phosphorylation at Ser-719 by CSNK2A1 regulates SLC9A3 activity through the formation of multiple signaling complexes. Intestinal and kidney specific. Most abundant in kidney cortex, followed equally by ileum and ascending colon, then kidney medulla and jejunum. Is absent from duodenum and descending colon.

The protein resides in the apical cell membrane. Its subcellular location is the cell membrane. It is found in the recycling endosome membrane. It localises to the early endosome membrane. It catalyses the reaction Na(+)(in) + H(+)(out) = Na(+)(out) + H(+)(in). With respect to regulation, seems to switch between active and inactive modes in response to various stimuli. Activated directly or indirectly by membrane phosphatidylinositol (PIs). Regulated by a variety of auxiliary proteins, which facilitate the maturation, cell surface expression and function of the transporter. Inhibited specifically by the drug tenapanor. Plasma membrane Na(+)/H(+) antiporter. Exchanges intracellular H(+) ions for extracellular Na(+) in 1:1 stoichiometry, playing a key role in salt and fluid absorption and pH homeostasis. Major apical Na(+)/H(+) exchanger in kidney and intestine playing an important role in renal and intestine Na(+) absorption and blood pressure regulation. The polypeptide is Sodium/hydrogen exchanger 3 (SLC9A3) (Oryctolagus cuniculus (Rabbit)).